Consider the following 176-residue polypeptide: COA8 family protein CG14806, mitochondrial (176 aa).

A mitochondrion-targeting transit peptide spans methionine 1–alanine 23.

It belongs to the COA8 family.

It localises to the mitochondrion inner membrane. In terms of biological role, may be required for cytochrome c complex (COX) assembly and function, COX being the terminal component of the mitochondrial respiratory chain. (Microbial infection) Required for optimal replication of E.chaffeensis. This chain is COA8 family protein CG14806, mitochondrial, found in Drosophila melanogaster (Fruit fly).